The chain runs to 337 residues: Ferredoxin--NADP reductase (337 aa).

FAD-binding residues include D35, Q43, Y48, V88, F123, D289, and T330.

Belongs to the ferredoxin--NADP reductase type 2 family. Homodimer. Requires FAD as cofactor.

The enzyme catalyses 2 reduced [2Fe-2S]-[ferredoxin] + NADP(+) + H(+) = 2 oxidized [2Fe-2S]-[ferredoxin] + NADPH. This is Ferredoxin--NADP reductase from Paramagnetospirillum magneticum (strain ATCC 700264 / AMB-1) (Magnetospirillum magneticum).